We begin with the raw amino-acid sequence, 451 residues long: Multidrug export protein MepA (451 aa).

12 consecutive transmembrane segments (helical) span residues 26-46, 54-74, 97-117, 139-159, 170-190, 194-214, 245-265, 282-302, 318-338, 355-375, 397-417, and 418-438; these read MIGT…IGFL, AISL…LFGV, SFSI…ALPF, LKVM…EQFA, IGML…IFGF, VVGA…FFII, IPAF…NLFL, LVQF…PLIA, AVIM…FTIG, ATFI…GFLF, VVII…GVIW, and SLLI…YLLR.

It belongs to the multi antimicrobial extrusion (MATE) (TC 2.A.66.1) family. MepA subfamily.

It is found in the cell membrane. Its function is as follows. Multidrug resistance efflux protein. This is Multidrug export protein MepA (mepA) from Staphylococcus aureus (strain MRSA252).